We begin with the raw amino-acid sequence, 191 residues long: FMN reductase (NADH) RutF (191 aa).

The protein belongs to the non-flavoprotein flavin reductase family. RutF subfamily.

The catalysed reaction is FMNH2 + NAD(+) = FMN + NADH + 2 H(+). Functionally, catalyzes the reduction of FMN to FMNH2 which is used to reduce pyrimidine by RutA via the Rut pathway. This is FMN reductase (NADH) RutF from Escherichia coli O1:K1 / APEC.